Here is a 419-residue protein sequence, read N- to C-terminus: Tyrosine--tRNA ligase (419 aa).

Tyrosine 34 lines the L-tyrosine pocket. Positions 39 to 48 (PTADSLHLGH) match the 'HIGH' region motif. Residues tyrosine 169 and glutamine 173 each coordinate L-tyrosine. The 'KMSKS' region signature appears at 229-233 (KFGKS). Lysine 232 is a binding site for ATP. Positions 352–419 (LNIIDLLVTS…KKKYFVLNFK (68 aa)) constitute an S4 RNA-binding domain.

The protein belongs to the class-I aminoacyl-tRNA synthetase family. TyrS type 1 subfamily. Homodimer.

It localises to the cytoplasm. The catalysed reaction is tRNA(Tyr) + L-tyrosine + ATP = L-tyrosyl-tRNA(Tyr) + AMP + diphosphate + H(+). Catalyzes the attachment of tyrosine to tRNA(Tyr) in a two-step reaction: tyrosine is first activated by ATP to form Tyr-AMP and then transferred to the acceptor end of tRNA(Tyr). The polypeptide is Tyrosine--tRNA ligase (Streptococcus agalactiae serotype Ia (strain ATCC 27591 / A909 / CDC SS700)).